A 353-amino-acid chain; its full sequence is Quinolinate synthase (353 aa).

Histidine 49 and serine 70 together coordinate iminosuccinate. Cysteine 115 serves as a coordination point for [4Fe-4S] cluster. Iminosuccinate is bound by residues 141–143 and serine 158; that span reads YAN. Cysteine 202 provides a ligand contact to [4Fe-4S] cluster. Iminosuccinate-binding positions include 228–230 and threonine 245; that span reads HPE. A [4Fe-4S] cluster-binding site is contributed by cysteine 299.

Belongs to the quinolinate synthase family. Type 1 subfamily. [4Fe-4S] cluster is required as a cofactor.

It localises to the cytoplasm. The enzyme catalyses iminosuccinate + dihydroxyacetone phosphate = quinolinate + phosphate + 2 H2O + H(+). It participates in cofactor biosynthesis; NAD(+) biosynthesis; quinolinate from iminoaspartate: step 1/1. Its function is as follows. Catalyzes the condensation of iminoaspartate with dihydroxyacetone phosphate to form quinolinate. This Marinobacter nauticus (strain ATCC 700491 / DSM 11845 / VT8) (Marinobacter aquaeolei) protein is Quinolinate synthase.